Here is a 646-residue protein sequence, read N- to C-terminus: Calcium-dependent protein kinase 2 (646 aa).

Glycine 2 is lipidated: N-myristoyl glycine. A lipid anchor (S-palmitoyl cysteine) is attached at cysteine 5. Residues arginine 27–leucine 169 form a disordered region. Residues glutamine 32–valine 43 are compositionally biased toward polar residues. Composition is skewed to basic and acidic residues over residues proline 73–valine 119 and alanine 126–lysine 157. The Protein kinase domain maps to tyrosine 186–valine 444. ATP is bound by residues leucine 192–threonine 200 and lysine 215. Aspartate 310 serves as the catalytic Proton acceptor. Phosphoserine is present on serine 350. Residues alanine 450–isoleucine 480 form an autoinhibitory domain region. 4 EF-hand domains span residues glutamate 487–asparagine 522, leucine 523–isoleucine 558, glutamate 559–glycine 592, and valine 593–methionine 628. 19 residues coordinate Ca(2+): aspartate 500, aspartate 502, serine 504, glutamine 506, glutamate 511, aspartate 536, aspartate 538, serine 540, threonine 542, glutamate 547, aspartate 572, aspartate 574, serine 576, glutamate 583, aspartate 606, aspartate 608, aspartate 610, arginine 612, and glutamate 617.

It belongs to the protein kinase superfamily. Ser/Thr protein kinase family. CDPK subfamily. As to quaternary structure, interacts with 14-3-3 proteins.

The protein localises to the endoplasmic reticulum membrane. It catalyses the reaction L-seryl-[protein] + ATP = O-phospho-L-seryl-[protein] + ADP + H(+). It carries out the reaction L-threonyl-[protein] + ATP = O-phospho-L-threonyl-[protein] + ADP + H(+). With respect to regulation, activated by calcium. Autophosphorylation may play an important role in the regulation of the kinase activity. May play a role in signal transduction pathways that involve calcium as a second messenger. The protein is Calcium-dependent protein kinase 2 (CPK2) of Arabidopsis thaliana (Mouse-ear cress).